The primary structure comprises 1111 residues: Putative leucine--tRNA ligase, cytoplasmic (1111 aa).

Residues 74 to 84 carry the 'HIGH' region motif; the sequence is PYMNGALHLGH. Serine 460 bears the Phosphoserine mark. The 'KMSKS' region motif lies at 737-741; that stretch reads KMSKS. Lysine 740 is an ATP binding site.

This sequence belongs to the class-I aminoacyl-tRNA synthetase family.

Its subcellular location is the cytoplasm. The catalysed reaction is tRNA(Leu) + L-leucine + ATP = L-leucyl-tRNA(Leu) + AMP + diphosphate. This Schizosaccharomyces pombe (strain 972 / ATCC 24843) (Fission yeast) protein is Putative leucine--tRNA ligase, cytoplasmic (lrs1).